The primary structure comprises 1143 residues: DNA-directed RNA polymerase subunit beta (1143 aa).

This sequence belongs to the RNA polymerase beta chain family. In plastids the minimal PEP RNA polymerase catalytic core is composed of four subunits: alpha, beta, beta', and beta''. When a (nuclear-encoded) sigma factor is associated with the core the holoenzyme is formed, which can initiate transcription.

The protein localises to the plastid. It localises to the chloroplast. It carries out the reaction RNA(n) + a ribonucleoside 5'-triphosphate = RNA(n+1) + diphosphate. DNA-dependent RNA polymerase catalyzes the transcription of DNA into RNA using the four ribonucleoside triphosphates as substrates. The protein is DNA-directed RNA polymerase subunit beta of Porphyra purpurea (Red seaweed).